We begin with the raw amino-acid sequence, 355 residues long: 3-dehydroquinate synthase (355 aa).

Residues 71 to 76 (EGEASK), 105 to 109 (GVVGD), 129 to 130 (TS), K142, K151, and 169 to 172 (TLKT) contribute to the NAD(+) site. Positions 184, 246, and 263 each coordinate Zn(2+).

This sequence belongs to the sugar phosphate cyclases superfamily. Dehydroquinate synthase family. Requires Co(2+) as cofactor. Zn(2+) serves as cofactor. The cofactor is NAD(+).

Its subcellular location is the cytoplasm. It catalyses the reaction 7-phospho-2-dehydro-3-deoxy-D-arabino-heptonate = 3-dehydroquinate + phosphate. It participates in metabolic intermediate biosynthesis; chorismate biosynthesis; chorismate from D-erythrose 4-phosphate and phosphoenolpyruvate: step 2/7. In terms of biological role, catalyzes the conversion of 3-deoxy-D-arabino-heptulosonate 7-phosphate (DAHP) to dehydroquinate (DHQ). The polypeptide is 3-dehydroquinate synthase (Streptococcus suis (strain 98HAH33)).